A 78-amino-acid chain; its full sequence is Large ribosomal subunit protein eL38 (78 aa).

Belongs to the eukaryotic ribosomal protein eL38 family. Component of the large ribosomal subunit (LSU). Mature yeast ribosomes consist of a small (40S) and a large (60S) subunit. The 40S small subunit contains 1 molecule of ribosomal RNA (18S rRNA) and 33 different proteins (encoded by 57 genes). The large 60S subunit contains 3 rRNA molecules (25S, 5.8S and 5S rRNA) and 46 different proteins (encoded by 81 genes).

The protein resides in the cytoplasm. Component of the ribosome, a large ribonucleoprotein complex responsible for the synthesis of proteins in the cell. The small ribosomal subunit (SSU) binds messenger RNAs (mRNAs) and translates the encoded message by selecting cognate aminoacyl-transfer RNA (tRNA) molecules. The large subunit (LSU) contains the ribosomal catalytic site termed the peptidyl transferase center (PTC), which catalyzes the formation of peptide bonds, thereby polymerizing the amino acids delivered by tRNAs into a polypeptide chain. The nascent polypeptides leave the ribosome through a tunnel in the LSU and interact with protein factors that function in enzymatic processing, targeting, and the membrane insertion of nascent chains at the exit of the ribosomal tunnel. In Saccharomyces cerevisiae (strain ATCC 204508 / S288c) (Baker's yeast), this protein is Large ribosomal subunit protein eL38.